A 1820-amino-acid polypeptide reads, in one-letter code: Kinesin-like protein KIF20B (1820 aa).

Residues 58-479 enclose the Kinesin motor domain; it reads YLQVCLRIRP…LKFSAIAQKV (422 aa). Residue 152-159 participates in ATP binding; sequence GLTNSGKT. Residue Ser-488 is modified to Phosphoserine. 2 coiled-coil regions span residues 523–603 and 674–793; these read ENSL…KIRE and GFED…MENT. Thr-560 is modified (phosphothreonine). The interval 829–866 is disordered; it reads SERKRVNENELQQDEPPAKKGSIHVSSAITEDQKKSEE. Ser-997 carries the post-translational modification Phosphoserine. The interval 1050–1107 is necessary and sufficient for interaction with SHTN1; sequence ENSFHSSIEAIWEECKEIVKASSKKSHQIEELEQQIEKLQAEVKGYKDENNRLKEKEH. Basic and acidic residues predominate over residues 1247-1264; that stretch reads EEEEETNRQETEKLKEEL. Positions 1247–1275 are disordered; that stretch reads EEEEETNRQETEKLKEELSASSARTQNLK. Positions 1265-1274 are enriched in polar residues; it reads SASSARTQNL. The segment at 1560–1820 is interaction with PIN1; that stretch reads IETQIMDIKP…KRRLRTKTAK (261 aa). At Ser-1588 the chain carries Phosphoserine. Position 1644 is a phosphothreonine; by CDK1 (Thr-1644). Ser-1658, Ser-1715, and Ser-1740 each carry phosphoserine. Polar residues predominate over residues 1760–1772; the sequence is LSNVEASKENVSQ. The interval 1760 to 1781 is disordered; sequence LSNVEASKENVSQPKRAKRKLY.

This sequence belongs to the TRAFAC class myosin-kinesin ATPase superfamily. Kinesin family. As to quaternary structure, oligomerizes (via kinesin motor domain). Associates with microtubules. Interacts (via C-terminal globular tail region) with PIN1 (via WW domain). Interacts with PRC1. Interacts with SHTN1 (via N-terminus); the interaction is direct and promotes the association of SHTN1 to microtubules in primary neurons. In terms of processing, phosphorylated during mitosis by CDK1. As to expression, brain, ovary, kidney and testis (at protein level). Overexpressed in bladder cancer cells (at protein level). Expressed in testis. Overexpressed in bladder cancer cells.

The protein resides in the nucleus. The protein localises to the cytoplasm. Its subcellular location is the cytoskeleton. It localises to the microtubule organizing center. It is found in the centrosome. The protein resides in the nucleolus. The protein localises to the nucleoplasm. Its subcellular location is the spindle. It localises to the spindle pole. It is found in the midbody. The protein resides in the cell projection. The protein localises to the axon. Its subcellular location is the growth cone. Its function is as follows. Plus-end-directed motor enzyme that is required for completion of cytokinesis. Required for proper midbody organization and abscission in polarized cortical stem cells. Plays a role in the regulation of neuronal polarization by mediating the transport of specific cargos. Participates in the mobilization of SHTN1 and in the accumulation of PIP3 in the growth cone of primary hippocampal neurons in a tubulin and actin-dependent manner. In the developing telencephalon, cooperates with SHTN1 to promote both the transition from the multipolar to the bipolar stage and the radial migration of cortical neurons from the ventricular zone toward the superficial layer of the neocortex. Involved in cerebral cortex growth. Acts as an oncogene for promoting bladder cancer cells proliferation, apoptosis inhibition and carcinogenic progression. The sequence is that of Kinesin-like protein KIF20B from Homo sapiens (Human).